The following is a 242-amino-acid chain: uncharacterized protein (242 aa).

A Response regulatory domain is found at 3-116 (TALVIDDEQF…RLNKTVKRLN (114 aa)). Residue Asp-54 is modified to 4-aspartylphosphate. Residues 139–240 (IPCIGHNRIV…LKVLKEMLGI (102 aa)) enclose the HTH LytTR-type domain.

This is an uncharacterized protein from Vibrio parahaemolyticus serotype O3:K6 (strain RIMD 2210633).